The following is an 86-amino-acid chain: Putative membrane protein insertion efficiency factor (86 aa).

The protein belongs to the UPF0161 family.

Its subcellular location is the cell inner membrane. Its function is as follows. Could be involved in insertion of integral membrane proteins into the membrane. The sequence is that of Putative membrane protein insertion efficiency factor from Histophilus somni (strain 129Pt) (Haemophilus somnus).